Here is an 83-residue protein sequence, read N- to C-terminus: Small ribosomal subunit protein eS27 (83 aa).

The C4-type zinc-finger motif lies at 37-59; the sequence is CPGCFNITTVFSHAQTVVICGSC.

Belongs to the eukaryotic ribosomal protein eS27 family. As to quaternary structure, component of the small ribosomal subunit (SSU). Mature yeast ribosomes consist of a small (40S) and a large (60S) subunit. The 40S small subunit contains 1 molecule of ribosomal RNA (18S rRNA) and at least 33 different proteins. The large 60S subunit contains 3 rRNA molecules (25S, 5.8S and 5S rRNA) and at least 46 different proteins. Zn(2+) is required as a cofactor.

It is found in the cytoplasm. In terms of biological role, component of the ribosome, a large ribonucleoprotein complex responsible for the synthesis of proteins in the cell. The small ribosomal subunit (SSU) binds messenger RNAs (mRNAs) and translates the encoded message by selecting cognate aminoacyl-transfer RNA (tRNA) molecules. The large subunit (LSU) contains the ribosomal catalytic site termed the peptidyl transferase center (PTC), which catalyzes the formation of peptide bonds, thereby polymerizing the amino acids delivered by tRNAs into a polypeptide chain. The nascent polypeptides leave the ribosome through a tunnel in the LSU and interact with protein factors that function in enzymatic processing, targeting, and the membrane insertion of nascent chains at the exit of the ribosomal tunnel. This is Small ribosomal subunit protein eS27 (rps27) from Schizosaccharomyces pombe (strain 972 / ATCC 24843) (Fission yeast).